The primary structure comprises 197 residues: Holliday junction branch migration complex subunit RuvA (197 aa).

The segment at 1 to 63 (MYDYIKGNLT…EDAHLLYGFH (63 aa)) is domain I. Residues 64–142 (TEDEKAVFLN…DINEVSTDKS (79 aa)) form a domain II region. Residues 143 to 147 (KVSTI) form a flexible linker region. The tract at residues 148 to 197 (NNNQELEEAVEALLALGYKTNELKKIEKFFEGTTDTAENYIKSALKMLMK) is domain III.

This sequence belongs to the RuvA family. Homotetramer. Forms an RuvA(8)-RuvB(12)-Holliday junction (HJ) complex. HJ DNA is sandwiched between 2 RuvA tetramers; dsDNA enters through RuvA and exits via RuvB. An RuvB hexamer assembles on each DNA strand where it exits the tetramer. Each RuvB hexamer is contacted by two RuvA subunits (via domain III) on 2 adjacent RuvB subunits; this complex drives branch migration. In the full resolvosome a probable DNA-RuvA(4)-RuvB(12)-RuvC(2) complex forms which resolves the HJ.

The protein localises to the cytoplasm. In terms of biological role, the RuvA-RuvB-RuvC complex processes Holliday junction (HJ) DNA during genetic recombination and DNA repair, while the RuvA-RuvB complex plays an important role in the rescue of blocked DNA replication forks via replication fork reversal (RFR). RuvA specifically binds to HJ cruciform DNA, conferring on it an open structure. The RuvB hexamer acts as an ATP-dependent pump, pulling dsDNA into and through the RuvAB complex. HJ branch migration allows RuvC to scan DNA until it finds its consensus sequence, where it cleaves and resolves the cruciform DNA. The sequence is that of Holliday junction branch migration complex subunit RuvA from Streptococcus mutans serotype c (strain ATCC 700610 / UA159).